Reading from the N-terminus, the 922-residue chain is NEDD4-like E3 ubiquitin-protein ligase WWP1 (922 aa).

The C2 domain occupies 1–116; sequence MATASPRSDT…IHNRKLERVK (116 aa). Polar residues-rich tracts occupy residues 210-219, 243-278, 286-302, 314-323, and 340-351; these read GDNTPSSPSQ, NGES…STTV, ILTS…TSAE, DTSNSRSSSA, and RQQSGNANTETL. The segment at 210-388 is disordered; sequence GDNTPSSPSQ…RPQPLPPGWE (179 aa). WW domains lie at 349–382, 381–414, 456–489, and 496–529; these read ETLP…RPQP, QPLP…RPTM, GPLP…DPRT, and EPLP…DPRN. Residues 349–531 form a required for interaction with and ubiquitination of AMOTL2. Required for interaction with YAP1 region; it reads ETLPSGWEQR…TTFKDPRNGK (183 aa). In terms of domain architecture, HECT spans 588–922; that stretch reads KPYDLRRRLY…IEETEGFGQE (335 aa). C890 serves as the catalytic Glycyl thioester intermediate.

As to quaternary structure, interacts with the Crumbs complex components PALS1 and PATJ; interaction with the Crumbs complex is enhanced by WWP1's interaction with AMOTL2 and facilitates WWP1 localization to the plasma membrane. Interaction with the Crumbs complex promotes WWP1 monoubiquitination of AMOTL2, which activates the Hippo signaling pathway. Binds KLF2 and HIVEP3. Binds SCNN1A, SCNN1B, SCNN1G, WBP1, WBP2, DRPLA and adenovirus type 2 PIII. Interacts with RNF11. Interacts with SPART. Interacts with ERBB4 isoforms JM-B CYT-1 and JM-A CYT-1. Interacts with SMAD1, SMAD2, SMAD3, SMAD5, SMAD6, SMAD7, TGFBR1 and TGFBR2. Associates with the TGFBR1:TGFBR2 receptor complex in presence of SMAD7. Interacts with SKIL isoform 1. Interacts with TP63 isoform 1 and isoform 2. Interacts with STAMBP and RNF11. Interacts with NDFIP1 and NDFIP2; this interaction activates the E3 ubiquitin-protein ligase. Interacts with TGIF. Interacts (via WW domains) with ARRDC1, ARRDC2 and ARRDC3. (Microbial infection) Interacts with HTLV-1 protein Gag. In terms of assembly, (Microbial infection) Interacts with ebola virus protein VP40. In terms of processing, auto-ubiquitinated and ubiquitinated by RNF11. Detected in heart, placenta, pancreas, kidney, liver, skeletal muscle, bone marrow, fetal brain, and at much lower levels in adult brain and lung. Isoform 1 and isoform 5 predominate in all tissues tested, except in testis and bone marrow, where isoform 5 is expressed at much higher levels than isoform 1.

It localises to the cytoplasm. It is found in the cell membrane. The protein resides in the nucleus. Its subcellular location is the cell junction. The enzyme catalyses S-ubiquitinyl-[E2 ubiquitin-conjugating enzyme]-L-cysteine + [acceptor protein]-L-lysine = [E2 ubiquitin-conjugating enzyme]-L-cysteine + N(6)-ubiquitinyl-[acceptor protein]-L-lysine.. It participates in protein modification; protein ubiquitination. With respect to regulation, activated by NDFIP1- and NDFIP2-binding. E3 ubiquitin-protein ligase which accepts ubiquitin from an E2 ubiquitin-conjugating enzyme in the form of a thioester and then directly transfers the ubiquitin to targeted substrates. Ubiquitinates ERBB4 isoforms JM-A CYT-1 and JM-B CYT-1, KLF2, KLF5 and TP63 and promotes their proteasomal degradation. Ubiquitinates RNF11 without targeting it for degradation. Ubiquitinates and promotes degradation of TGFBR1; the ubiquitination is enhanced by SMAD7. Ubiquitinates SMAD6 and SMAD7. Ubiquitinates and promotes degradation of SMAD2 in response to TGF-beta signaling, which requires interaction with TGIF. Activates the Hippo signaling pathway in response to cell contact inhibition and recruitment to the Crumbs complex at the cell membrane. Monoubiquitinates AMOTL2 which facilitates its interaction with and activation of LATS2. LATS2 then phosphorylates YAP1, excluding it from the nucleus and therefore ultimately represses YAP1-driven transcription of target genes. The sequence is that of NEDD4-like E3 ubiquitin-protein ligase WWP1 (WWP1) from Homo sapiens (Human).